Reading from the N-terminus, the 269-residue chain is Protein shisa-1 (269 aa).

The signal sequence occupies residues 1 to 18 (MEFIVLLTVCALLGLSCG). Residues 19–98 (QHGEYCHGWT…LPPTVPTYFP (80 aa)) lie on the Extracellular side of the membrane. The chain crosses the membrane as a helical span at residues 99–119 (FLLVGSIFVSFVILGSLVGLC). The Cytoplasmic portion of the chain corresponds to 120-269 (CCKCLKPEDD…TVCSGSPSKC (150 aa)). The interval 129-167 (DTQVSGPAPIQSRLLDQDPSTDTSRHSSSSSASMPRPPI) is disordered. Positions 146–162 (DPSTDTSRHSSSSSASM) are enriched in low complexity.

The protein belongs to the shisa family. As to quaternary structure, interacts with immature forms of fzd8 and fgfr.

Its subcellular location is the endoplasmic reticulum. It is found in the membrane. Functionally, required for head formation during gastrulation. Functions as an inhibitor for the caudalizing signals wnt and fgf, does not inhibit bmp, activin and nodal signaling in head formation process. Induces retention of fzd8 in the endoplasmic reticulum and inhibits trafficking of fzd8 to the cell surface. This Xenopus laevis (African clawed frog) protein is Protein shisa-1 (shisa1).